The sequence spans 231 residues: Membrane protein YknW (231 aa).

The next 5 membrane-spanning stretches (helical) occupy residues 38-58, 93-113, 128-148, 171-191, and 205-225; these read VWGP…LQSL, GAII…WLCV, LSLF…IVAF, LASV…LLAI, and WISA…SGLI.

As to quaternary structure, interacts with a complex composed of YknX, YknY and YknZ.

Its subcellular location is the cell membrane. Part of an unusual four-component transporter, which is required for protection against the killing factor SdpC (sporulation-delaying protein). Has a role in the assembly of the YknXYZ complex. This is Membrane protein YknW (yknW) from Bacillus subtilis (strain 168).